The following is a 121-amino-acid chain: UPF0102 protein Xfasm12_1748 (121 aa).

The protein belongs to the UPF0102 family.

This Xylella fastidiosa (strain M12) protein is UPF0102 protein Xfasm12_1748.